Here is a 40-residue protein sequence, read N- to C-terminus: Photosystem II reaction center protein J (40 aa).

A helical membrane pass occupies residues 8–28 (IPLWLIGTIAGILVIGLVGIF).

The protein belongs to the PsbJ family. In terms of assembly, PSII is composed of 1 copy each of membrane proteins PsbA, PsbB, PsbC, PsbD, PsbE, PsbF, PsbH, PsbI, PsbJ, PsbK, PsbL, PsbM, PsbT, PsbX, PsbY, PsbZ, Psb30/Ycf12, at least 3 peripheral proteins of the oxygen-evolving complex and a large number of cofactors. It forms dimeric complexes.

Its subcellular location is the plastid. The protein localises to the chloroplast thylakoid membrane. One of the components of the core complex of photosystem II (PSII). PSII is a light-driven water:plastoquinone oxidoreductase that uses light energy to abstract electrons from H(2)O, generating O(2) and a proton gradient subsequently used for ATP formation. It consists of a core antenna complex that captures photons, and an electron transfer chain that converts photonic excitation into a charge separation. This Anthoceros angustus (Hornwort) protein is Photosystem II reaction center protein J.